A 256-amino-acid chain; its full sequence is NifU-like protein, mitochondrial (256 aa).

The CxxC motif motif lies at 196 to 199 (CTSC).

Belongs to the NifU family. As to quaternary structure, homodimer; in absence of BOL3, probably bridged by an iron-sulfure cluster. Interacts with BOL3. Interacts with apo-target proteins, such as ACO1, LYS4, ACO2 and SDH2.

The protein resides in the mitochondrion matrix. In terms of biological role, involved in iron homeostasis within the mitochondrion where it is involved in the assembly of iron-sulfur proteins. Together with BOL3, required during the last step of iron-sulfur protein assembly when the iron-sulfur cluster is inserted into the target protein. Required for protecting iron sulfur clusters from oxidative damage. This Saccharomyces cerevisiae (strain ATCC 204508 / S288c) (Baker's yeast) protein is NifU-like protein, mitochondrial (NFU1).